A 265-amino-acid chain; its full sequence is Tryptophan synthase alpha chain (265 aa).

Active-site proton acceptor residues include E48 and D59.

It belongs to the TrpA family. Tetramer of two alpha and two beta chains.

The enzyme catalyses (1S,2R)-1-C-(indol-3-yl)glycerol 3-phosphate + L-serine = D-glyceraldehyde 3-phosphate + L-tryptophan + H2O. It participates in amino-acid biosynthesis; L-tryptophan biosynthesis; L-tryptophan from chorismate: step 5/5. In terms of biological role, the alpha subunit is responsible for the aldol cleavage of indoleglycerol phosphate to indole and glyceraldehyde 3-phosphate. The protein is Tryptophan synthase alpha chain of Ruthia magnifica subsp. Calyptogena magnifica.